Here is a 340-residue protein sequence, read N- to C-terminus: tRNA-dihydrouridine(20/20a) synthase (340 aa).

Residues 22–24 and Gln-75 contribute to the FMN site; that span reads PMM. The active-site Proton donor is the Cys-105. FMN is bound by residues Lys-144, His-177, 217 to 219, and 239 to 240; these read NGG and GR.

It belongs to the Dus family. DusA subfamily. Requires FMN as cofactor.

The catalysed reaction is 5,6-dihydrouridine(20) in tRNA + NADP(+) = uridine(20) in tRNA + NADPH + H(+). The enzyme catalyses 5,6-dihydrouridine(20) in tRNA + NAD(+) = uridine(20) in tRNA + NADH + H(+). It carries out the reaction 5,6-dihydrouridine(20a) in tRNA + NADP(+) = uridine(20a) in tRNA + NADPH + H(+). It catalyses the reaction 5,6-dihydrouridine(20a) in tRNA + NAD(+) = uridine(20a) in tRNA + NADH + H(+). In terms of biological role, catalyzes the synthesis of 5,6-dihydrouridine (D), a modified base found in the D-loop of most tRNAs, via the reduction of the C5-C6 double bond in target uridines. Specifically modifies U20 and U20a in tRNAs. This chain is tRNA-dihydrouridine(20/20a) synthase, found in Xylella fastidiosa (strain 9a5c).